The primary structure comprises 448 residues: MRFDPKEIGEILEMLLFRELDIRAVTLSVNTLPAIRHRVSDTISALEELLEPYLKKLRPAVEKVASRLGVRIVTVRLAVSPVSIMLEPIGDAKSTVELAYFLDDLAGKYGVDMVGGFSAFEHAGVSRGDRALMEGLAEALNGTSRLAGFLNVASTMTGINLDAVRKSADIILSLKPHAAARFAVTANLPEDVPFMPGAYHGLGLPDAVINIAVSGPGVVEAVVRNLPEADARTLHDAIKRAAFKITRLGELVGREVSKELGVPFGAVDLSVAPSPKVGDSVAAILEAMGLPRVGSPGSVFALALFVDAVKKGGAMAVSNIGGLSGAFIPVSEDAVMAQAAAEGAVTLDTLKAMAAVCNTGLDMIGIPGDASADVVAAIIADVMALAVYLDKPLGVRLVPVPGGKPGDYYDLGGLYGKVAVMEISRYSKIPLMSRGGTAPPGVERLKKG.

Belongs to the UPF0210 family.

This chain is UPF0210 protein PAE3581, found in Pyrobaculum aerophilum (strain ATCC 51768 / DSM 7523 / JCM 9630 / CIP 104966 / NBRC 100827 / IM2).